The sequence spans 733 residues: Alpha,alpha-trehalose-phosphate synthase [UDP-forming] A (733 aa).

The protein in the N-terminal section; belongs to the glycosyltransferase 20 family. In the C-terminal section; belongs to the trehalose phosphatase family.

It catalyses the reaction D-glucose 6-phosphate + UDP-alpha-D-glucose = alpha,alpha-trehalose 6-phosphate + UDP + H(+). Synthesizes trehalose 6-phosphate, the precursor for the production of trehalose, the main carbohydrate storage reserve of the dormant spore. Trehalose accumulates in both prestalk and prespore cells and then is rapidly metabolized during terminal differentiation of stalk cells, while being stored in spores, where it serves as the principal energy and carbon source for germination. This Dictyostelium discoideum (Social amoeba) protein is Alpha,alpha-trehalose-phosphate synthase [UDP-forming] A (tpsA).